Here is a 443-residue protein sequence, read N- to C-terminus: GPI mannosyltransferase 1 (443 aa).

A run of 11 helical transmembrane segments spans residues 8-28, 68-88, 90-110, 136-156, 160-180, 232-252, 273-291, 302-322, 347-367, 374-394, and 406-426; these read PFMV…YGAW, PLLA…FSFG, ALFA…LTLT, TRGS…WAVL, IYLG…PFIY, LTLI…LHYG, FSPY…AGAV, FESL…PLVL, SQYF…SSLL, IAVA…GYLL, and LFLA…VIVA.

It belongs to the PIGM family.

Its subcellular location is the endoplasmic reticulum membrane. Its pathway is glycolipid biosynthesis; glycosylphosphatidylinositol-anchor biosynthesis. Mannosyltransferase involved in glycosylphosphatidylinositol-anchor biosynthesis. Transfers the first alpha-1,4-mannose to GlcN-acyl-PI during GPI precursor assembly. Required for cell wall integrity. This is GPI mannosyltransferase 1 (gpi14) from Emericella nidulans (strain FGSC A4 / ATCC 38163 / CBS 112.46 / NRRL 194 / M139) (Aspergillus nidulans).